Reading from the N-terminus, the 270-residue chain is Phosphatidylglycerol--prolipoprotein diacylglyceryl transferase (270 aa).

Transmembrane regions (helical) follow at residues 10-30 (VAVAIGPLQIHWYGLMYLVGI), 56-76 (LIFWLAMGVIVGGRLGYVLFY), 92-112 (WKGGMAFHGGFVGVMIAAWWF), 120-140 (FFQLMDFVAPLVPIGLGAGRI), 175-195 (SQLYQFALEGVALFIILNLYA), 202-222 (MAVSGMFALFYGIFRFVVEFV), and 237-257 (VTMGQILSLPMIIAGLFLIWL). An a 1,2-diacyl-sn-glycero-3-phospho-(1'-sn-glycerol)-binding site is contributed by arginine 139.

It belongs to the Lgt family.

It is found in the cell inner membrane. It catalyses the reaction L-cysteinyl-[prolipoprotein] + a 1,2-diacyl-sn-glycero-3-phospho-(1'-sn-glycerol) = an S-1,2-diacyl-sn-glyceryl-L-cysteinyl-[prolipoprotein] + sn-glycerol 1-phosphate + H(+). It participates in protein modification; lipoprotein biosynthesis (diacylglyceryl transfer). In terms of biological role, catalyzes the transfer of the diacylglyceryl group from phosphatidylglycerol to the sulfhydryl group of the N-terminal cysteine of a prolipoprotein, the first step in the formation of mature lipoproteins. In Pseudomonas savastanoi pv. phaseolicola (strain 1448A / Race 6) (Pseudomonas syringae pv. phaseolicola (strain 1448A / Race 6)), this protein is Phosphatidylglycerol--prolipoprotein diacylglyceryl transferase.